The sequence spans 150 residues: D-aminoacyl-tRNA deacylase (150 aa).

Residues 138–139 carry the Gly-cisPro motif, important for rejection of L-amino acids motif; it reads GP.

It belongs to the DTD family. Homodimer.

It localises to the cytoplasm. The catalysed reaction is glycyl-tRNA(Ala) + H2O = tRNA(Ala) + glycine + H(+). It carries out the reaction a D-aminoacyl-tRNA + H2O = a tRNA + a D-alpha-amino acid + H(+). An aminoacyl-tRNA editing enzyme that deacylates mischarged D-aminoacyl-tRNAs. Also deacylates mischarged glycyl-tRNA(Ala), protecting cells against glycine mischarging by AlaRS. Acts via tRNA-based rather than protein-based catalysis; rejects L-amino acids rather than detecting D-amino acids in the active site. By recycling D-aminoacyl-tRNA to D-amino acids and free tRNA molecules, this enzyme counteracts the toxicity associated with the formation of D-aminoacyl-tRNA entities in vivo and helps enforce protein L-homochirality. The chain is D-aminoacyl-tRNA deacylase from Bacteroides thetaiotaomicron (strain ATCC 29148 / DSM 2079 / JCM 5827 / CCUG 10774 / NCTC 10582 / VPI-5482 / E50).